An 80-amino-acid chain; its full sequence is DNA-directed RNA polymerase subunit Rpo5 (80 aa).

This sequence belongs to the archaeal Rpo5/eukaryotic RPB5 RNA polymerase subunit family. As to quaternary structure, part of the RNA polymerase complex.

The protein localises to the cytoplasm. It carries out the reaction RNA(n) + a ribonucleoside 5'-triphosphate = RNA(n+1) + diphosphate. In terms of biological role, DNA-dependent RNA polymerase (RNAP) catalyzes the transcription of DNA into RNA using the four ribonucleoside triphosphates as substrates. The polypeptide is DNA-directed RNA polymerase subunit Rpo5 (Thermofilum pendens (strain DSM 2475 / Hrk 5)).